A 255-amino-acid polypeptide reads, in one-letter code: 5'-nucleotidase SurE (255 aa).

Positions 8, 9, 40, and 93 each coordinate a divalent metal cation.

The protein belongs to the SurE nucleotidase family. A divalent metal cation is required as a cofactor.

Its subcellular location is the cytoplasm. It catalyses the reaction a ribonucleoside 5'-phosphate + H2O = a ribonucleoside + phosphate. Nucleotidase that shows phosphatase activity on nucleoside 5'-monophosphates. The sequence is that of 5'-nucleotidase SurE from Bradyrhizobium sp. (strain BTAi1 / ATCC BAA-1182).